A 539-amino-acid polypeptide reads, in one-letter code: Probable transcription factor GLK2 (539 aa).

Residues 86-218 (FASSPDDEPP…NSHGKRKVKV (133 aa)) are disordered. Low complexity-rich tracts occupy residues 99–111 (SAPG…AAAG) and 121–130 (AAAAAAAAAA). Basic and acidic residues predominate over residues 144 to 161 (KKDDEERSSSLPEEKDAK). The 60-residue stretch at 212–271 (GKRKVKVDWTPELHRRFVQAVEQLGIDKAVPSRILELMGIECLTRHNIASHLQKYRSHRK) folds into the HTH myb-type domain. Residues 242 to 267 (PSRILELMGIECLTRHNIASHLQKYR) constitute a DNA-binding region (H-T-H motif).

As to expression, expressed in leaves.

It localises to the nucleus. Functionally, probable transcriptional activator that promotes chloroplast development. Acts as an activator of nuclear photosynthetic genes involved in chlorophyll biosynthesis, light harvesting, and electron transport. This chain is Probable transcription factor GLK2 (GLK2), found in Oryza sativa subsp. japonica (Rice).